Reading from the N-terminus, the 233-residue chain is Adenylyl cyclase-associated protein 1 (233 aa).

Tyr-14 bears the Phosphotyrosine mark. Phosphoserine is present on Ser-17. Disordered regions lie at residues 43 to 71 (VDKX…PSAL) and 91 to 129 (DEKT…KPVT). The span at 53–64 (LSGLPSGPSAGS) shows a compositional bias: low complexity. Residue Lys-101 is modified to N6-methyllysine. Phosphoserine is present on residues Ser-104, Ser-115, Ser-122, and Ser-124. A Glycyl lysine isopeptide (Lys-Gly) (interchain with G-Cter in SUMO1) cross-link involves residue Lys-151. One can recognise a C-CAP/cofactor C-like domain in the interval 173–221 (VPXISINKXDGRHIYLSKNSLDCEIVSAKSSEMNVLIPTEGGDFNEFPV).

Belongs to the CAP family. Homodimer. Binds actin monomers.

The protein localises to the cell membrane. In terms of biological role, directly regulates filament dynamics and has been implicated in a number of complex developmental and morphological processes, including mRNA localization and the establishment of cell polarity. The sequence is that of Adenylyl cyclase-associated protein 1 (CAP1) from Sus scrofa (Pig).